The chain runs to 424 residues: NADH-quinone oxidoreductase subunit H (424 aa).

9 helical membrane passes run 11–31 (LVVA…LVAI), 79–99 (FVYF…FAFI), 119–139 (LPVA…GIVL), 160–180 (VISY…YAGS), 193–213 (VWYI…MVGE), 255–275 (VSAL…PLNL), 283–303 (WWPV…YFWL), 317–337 (ALGW…AAVI), and 347–367 (YWTP…VMSL). The tract at residues 376 to 424 (AVTKARRRGKQPAAGPDEQGALEPLFPTPPLPMKPLAQPVGASKENARG) is disordered.

The protein belongs to the complex I subunit 1 family. NDH-1 is composed of 14 different subunits. Subunits NuoA, H, J, K, L, M, N constitute the membrane sector of the complex.

The protein resides in the cell membrane. It catalyses the reaction a quinone + NADH + 5 H(+)(in) = a quinol + NAD(+) + 4 H(+)(out). Its function is as follows. NDH-1 shuttles electrons from NADH, via FMN and iron-sulfur (Fe-S) centers, to quinones in the respiratory chain. The immediate electron acceptor for the enzyme in this species is believed to be menaquinone. Couples the redox reaction to proton translocation (for every two electrons transferred, four hydrogen ions are translocated across the cytoplasmic membrane), and thus conserves the redox energy in a proton gradient. This subunit may bind ubiquinone. The polypeptide is NADH-quinone oxidoreductase subunit H (Mycobacterium ulcerans (strain Agy99)).